Consider the following 166-residue polypeptide: Putative 4-hydroxy-4-methyl-2-oxoglutarate aldolase (166 aa).

Substrate-binding positions include 74-77 (GDQI) and Arg-96. Asp-97 is an a divalent metal cation binding site.

It belongs to the class II aldolase/RraA-like family. As to quaternary structure, homotrimer. Requires a divalent metal cation as cofactor.

The enzyme catalyses 4-hydroxy-4-methyl-2-oxoglutarate = 2 pyruvate. It catalyses the reaction oxaloacetate + H(+) = pyruvate + CO2. Catalyzes the aldol cleavage of 4-hydroxy-4-methyl-2-oxoglutarate (HMG) into 2 molecules of pyruvate. Also contains a secondary oxaloacetate (OAA) decarboxylase activity due to the common pyruvate enolate transition state formed following C-C bond cleavage in the retro-aldol and decarboxylation reactions. The protein is Putative 4-hydroxy-4-methyl-2-oxoglutarate aldolase of Xanthomonas campestris pv. campestris (strain B100).